A 245-amino-acid polypeptide reads, in one-letter code: Ribonuclease 3 (245 aa).

The RNase III domain maps to Phe19–Gly148. Residue Glu61 coordinates Mg(2+). Asp65 is a catalytic residue. 2 residues coordinate Mg(2+): Asp134 and Glu137. Residue Glu137 is part of the active site. A DRBM domain is found at Asp174–Glu243.

This sequence belongs to the ribonuclease III family. In terms of assembly, homodimer. It depends on Mg(2+) as a cofactor.

Its subcellular location is the cytoplasm. It carries out the reaction Endonucleolytic cleavage to 5'-phosphomonoester.. Functionally, digests double-stranded RNA. Involved in the processing of primary rRNA transcript to yield the immediate precursors to the large and small rRNAs (23S and 16S). Processes some mRNAs, and tRNAs when they are encoded in the rRNA operon. Processes pre-crRNA and tracrRNA of type II CRISPR loci if present in the organism. The protein is Ribonuclease 3 of Bacillus cereus (strain AH187).